The following is a 469-amino-acid chain: Cold shock protein CS66 (469 aa).

21 repeat units span residues 9–31 (GEKK…DHKE), 49–62 (TGGA…TGTT), 72–94 (GEKK…DHQQ), 95–108 (TGGT…TGTA), 115–128 (TGGT…TGTA), 135–148 (TNGT…TGTA), 149–162 (TGGS…TGVT), 170–192 (GEKK…DNQQ), 193–206 (TAGT…FATG), 213–226 (TGGT…AGVT), 234–256 (GEKK…DHQQ), 257–270 (TGGT…TGAA), 277–290 (GGGT…TGMT), 298–320 (GGKK…DNQQ), 321–334 (TGGA…TGAA), 341–354 (SGGT…TGMT), 362–384 (GEKK…DHQQ), 385–398 (TGGA…TGTA), 405–418 (GGGT…TGMT), 428–441 (TGGT…TGTT), and 452–469 (GEKK…PGQH). Positions 9–390 (GEKKGIMEKI…DHQQTGGAYG (382 aa)) are 7 X 23 AA approximate repeats. The segment at 49 to 441 (TGGAYGQEGH…HGQHGHTGTT (393 aa)) is 14 X 14 AA approximate repeats. The segment at 87 to 112 (GGHADHQQTGGTYGQQGHTGTATHGT) is disordered. Residues 93 to 112 (QQTGGTYGQQGHTGTATHGT) are compositionally biased toward low complexity. Positions 203–214 (FATGTHGTPATG) are enriched in low complexity. Residues 203-469 (FATGTHGTPA…KIKDKLPGQH (267 aa)) are disordered. Positions 233 to 254 (TGEKKGLMENIKDKLPGGHGDH) are enriched in basic and acidic residues. Residues 255–274 (QQTGGTYGQQGHTGAATHGT) show a composition bias toward low complexity. The segment covering 288–301 (GMTGTGTHGTGGKK) has biased composition (gly residues). Residues 302–312 (GVMENIKDKLP) are compositionally biased toward basic and acidic residues. The span at 361–382 (TGEKKAVMENIKDKLPGGHGDH) shows a compositional bias: basic and acidic residues. 2 stretches are compositionally biased toward low complexity: residues 383–402 (QQTG…THGT) and 412–429 (HGNT…TATG). Positions 439–450 (GTTGTGTHGTDG) are enriched in gly residues. The segment covering 451 to 469 (VGEKKSLMDKIKDKLPGQH) has biased composition (basic and acidic residues).

Belongs to the plant dehydrin family.

In terms of biological role, may reduce intracellular freezing damage during winter by hydrogen-bonding to the lattice of the nascent ice crystals, thus modifying the structure and/or propagation of ice crystals. The chain is Cold shock protein CS66 (CS66) from Triticum aestivum (Wheat).